The primary structure comprises 773 residues: Pentatricopeptide repeat-containing protein At1g76280 (773 aa).

11 PPR repeats span residues 130 to 165 (DSRSLLFIVKSLCNGGHLDKASEFIHAVREDDRISP), 166 to 200 (LLPIYNFFLGACARTRSVYHASKCLELMDQRRVGK), 201 to 231 (NGITYVALLKLAVFQRNLSTVNDIWKHYVNH), 235 to 269 (DILSLRRFIWSFTRLGDLKSAYELLQHMVYLALRG), 332 to 369 (LRWSFNDVIHACGQSKNSELAEQLMLQLKVMQQQNLKP), 370 to 400 (YDSTLATVAAYCSKALQVDLAEHLLDQISEC), 402 to 436 (YSYPFNNLLAAYDSLDQPERAVRVLARMKELKLRP), 524 to 558 (GTPTYNIVLHSLLEANETDMVINIFKRMKSCGCPA), 559 to 593 (DVATYNIMIDCCSLIHSYKSACALVSMMIRDGFSP), 594 to 628 (KAVTFTALMKILLNDANFEEALNLLDQAALEEIHL), and 629 to 663 (DVLSYNTILRKAFEKGMIDVIEYIVEQMHREKVNP).

The protein belongs to the PPR family. P subfamily.

This is Pentatricopeptide repeat-containing protein At1g76280 from Arabidopsis thaliana (Mouse-ear cress).